A 548-amino-acid polypeptide reads, in one-letter code: Glucose-6-phosphate isomerase 1 (548 aa).

E353 (proton donor) is an active-site residue. Active-site residues include H384 and K495.

It belongs to the GPI family.

It is found in the cytoplasm. The catalysed reaction is alpha-D-glucose 6-phosphate = beta-D-fructose 6-phosphate. It functions in the pathway carbohydrate biosynthesis; gluconeogenesis. Its pathway is carbohydrate degradation; glycolysis; D-glyceraldehyde 3-phosphate and glycerone phosphate from D-glucose: step 2/4. In terms of biological role, catalyzes the reversible isomerization of glucose-6-phosphate to fructose-6-phosphate. The protein is Glucose-6-phosphate isomerase 1 of Chromohalobacter salexigens (strain ATCC BAA-138 / DSM 3043 / CIP 106854 / NCIMB 13768 / 1H11).